Reading from the N-terminus, the 424-residue chain is Dihydroorotase (424 aa).

The Zn(2+) site is built by His-58 and His-60. Substrate-binding positions include 60-62, Asn-92, and Asn-276; that span reads HLR. Asp-303 provides a ligand contact to Zn(2+). The active site involves Asp-303. Residues His-307 and 321–322 contribute to the substrate site; that span reads FG.

It belongs to the metallo-dependent hydrolases superfamily. DHOase family. Class I DHOase subfamily. Requires Zn(2+) as cofactor.

It carries out the reaction (S)-dihydroorotate + H2O = N-carbamoyl-L-aspartate + H(+). Its pathway is pyrimidine metabolism; UMP biosynthesis via de novo pathway; (S)-dihydroorotate from bicarbonate: step 3/3. Its function is as follows. Catalyzes the reversible cyclization of carbamoyl aspartate to dihydroorotate. This Staphylococcus aureus (strain COL) protein is Dihydroorotase.